The following is an 824-amino-acid chain: MSDQDGKKPLGLSGGARSGRVNQSFSRGRTKSVVVETKRKRVMVPKPGAPSAAAQNAEGGKRDKSVPDAEMDRRLKALQAAKARESQEAEERVKAEREREEERNRRRADAEAKEREEREREEALKAKEEEDDRRKAEEEARRNAPPEAAAPAVDPAAAATPRGGGKAAPARREPERDNKRENRSRGNDGGGRRAGKLTVNQAMSGGEGGRQRSMAAMKRKQERQRQKAMGGSVDREKVIRDVKVPETIIVAELANRMSERVGDVVKALMNNGMMITQNQPIDADTAELIIEEFGHRVQRVSDADVEQVIDTVEDDEGKLLPRPPVITIMGHVDHGKTSLLDRIRQANVVSGEAGGITQHIGAYQVTTESGAVLSFLDTPGHAAFTSMRARGAQVTDIVVLVVAADDAVMPQTIEAIAHAKAAEVPMIVAINKIDRPAADPQKVRTDLLQHEVIVEAMSGEVQDVEVSAMTGQGLPELLEAIALQAELLELKANPDRAAQGAVIEAQLDVGRGPVATVLVEKGTLRQGDIFVVGEQWGKVRALVNDQGDRVKDAGPSVPVEVLGLNGTPEAGDVLNVVETEAQAREIAEYREQAAKDKRAAAGAATTLDQLLANAKADENVRELQVVMKADVQGSAEAIVQALEKIGNDEVRVRVLHYGVGAITESDIGLAEASGTPVIGFNVRANAPARNAANQKGVEIRYYSVIYDLVDDVKAAASGLLGAEIRENFIGYANIKEVFKVSGVGNVAGCLVTEGVARRSAGVRLLRDDVVIHEGTLKTLKRFKDEVKEVQSGQECGMAFENYEDIRPDDVIEIFEREEVERSLT.

The segment at 1 to 234 is disordered; that stretch reads MSDQDGKKPL…RQKAMGGSVD (234 aa). Basic and acidic residues-rich tracts occupy residues 59–75 and 82–144; these read GGKR…DRRL and KARE…RRNA. Over residues 145–159 the composition is skewed to low complexity; that stretch reads PPEAAAPAVDPAAAA. Residues 170-186 show a composition bias toward basic and acidic residues; sequence ARREPERDNKRENRSRG. A tr-type G domain is found at 321 to 491; the sequence is PRPPVITIMG…ALQAELLELK (171 aa). The segment at 330 to 337 is G1; sequence GHVDHGKT. GTP is bound at residue 330–337; it reads GHVDHGKT. The segment at 355–359 is G2; that stretch reads GITQH. Positions 377–380 are G3; sequence DTPG. GTP is bound by residues 377–381 and 431–434; these read DTPGH and NKID. A G4 region spans residues 431–434; sequence NKID. The segment at 467-469 is G5; sequence SAM.

The protein belongs to the TRAFAC class translation factor GTPase superfamily. Classic translation factor GTPase family. IF-2 subfamily.

It localises to the cytoplasm. One of the essential components for the initiation of protein synthesis. Protects formylmethionyl-tRNA from spontaneous hydrolysis and promotes its binding to the 30S ribosomal subunits. Also involved in the hydrolysis of GTP during the formation of the 70S ribosomal complex. The chain is Translation initiation factor IF-2 from Jannaschia sp. (strain CCS1).